A 274-amino-acid polypeptide reads, in one-letter code: NH(3)-dependent NAD(+) synthetase (274 aa).

46 to 53 serves as a coordination point for ATP; the sequence is GISGGQDS. Mg(2+) is bound at residue D52. Position 140 (R140) interacts with deamido-NAD(+). T160 is an ATP binding site. E165 lines the Mg(2+) pocket. Residues K173 and D180 each contribute to the deamido-NAD(+) site. ATP is bound by residues K189 and T211. 260–261 is a deamido-NAD(+) binding site; the sequence is HK.

This sequence belongs to the NAD synthetase family. In terms of assembly, homodimer.

The catalysed reaction is deamido-NAD(+) + NH4(+) + ATP = AMP + diphosphate + NAD(+) + H(+). It participates in cofactor biosynthesis; NAD(+) biosynthesis; NAD(+) from deamido-NAD(+) (ammonia route): step 1/1. Functionally, catalyzes the ATP-dependent amidation of deamido-NAD to form NAD. Uses ammonia as a nitrogen source. This is NH(3)-dependent NAD(+) synthetase from Listeria innocua serovar 6a (strain ATCC BAA-680 / CLIP 11262).